The primary structure comprises 594 residues: Sodium-dependent glucose transporter 1 (594 aa).

11 helical membrane passes run 77-97, 115-137, 144-161, 166-186, 205-225, 269-289, 311-331, 349-371, 393-413, 439-459, and 467-487; these read WLVS…ISVL, LSYI…GILF, LLLG…SGTP, AWVL…LDTG, ALHF…KLLF, IVIG…YFCI, TLII…VAYG, AAGL…IFFA, LLCL…LYGI, IFVV…GFLL, and LLMY…PVLY.

Belongs to the major facilitator superfamily.

It localises to the apical cell membrane. Functionally, may function as a sodium-dependent glucose transporter. Potential channels for urea in the inner medulla of kidney. This chain is Sodium-dependent glucose transporter 1 (mfsd4b), found in Danio rerio (Zebrafish).